A 207-amino-acid chain; its full sequence is Large ribosomal subunit protein uL3 (207 aa).

The segment at 113 to 148 (KGKGFQGPIKRHGQSRGPMAHGSRYHRRPGSMGPVA) is disordered.

It belongs to the universal ribosomal protein uL3 family. Part of the 50S ribosomal subunit. Forms a cluster with proteins L14 and L19.

Its function is as follows. One of the primary rRNA binding proteins, it binds directly near the 3'-end of the 23S rRNA, where it nucleates assembly of the 50S subunit. This Lactococcus lactis subsp. lactis (strain IL1403) (Streptococcus lactis) protein is Large ribosomal subunit protein uL3.